Reading from the N-terminus, the 346-residue chain is L-threonine dehydratase catabolic TdcB (346 aa).

59 to 60 (FT) is an AMP binding site. N6-(pyridoxal phosphate)lysine is present on K64. Residues Q94, 125–126 (GY), and N321 each bind AMP.

Belongs to the serine/threonine dehydratase family. As to quaternary structure, in the native structure, TdcB is in a dimeric form, whereas in the TdcB-AMP complex, it exists in a tetrameric form (dimer of dimers). The cofactor is pyridoxal 5'-phosphate.

The enzyme catalyses L-threonine = 2-oxobutanoate + NH4(+). It functions in the pathway amino-acid degradation; L-threonine degradation via propanoate pathway; propanoate from L-threonine: step 1/4. Each protein molecule can bind up to four molecules of AMP, which act as an allosteric activator to the enzyme. Functionally, catalyzes the anaerobic formation of alpha-ketobutyrate and ammonia from threonine in a two-step reaction. The first step involved a dehydration of threonine and a production of enamine intermediates (aminocrotonate), which tautomerizes to its imine form (iminobutyrate). Both intermediates are unstable and short-lived. The second step is the nonenzymatic hydrolysis of the enamine/imine intermediates to form 2-ketobutyrate and free ammonia. In the low water environment of the cell, the second step is accelerated by RidA. The polypeptide is L-threonine dehydratase catabolic TdcB (tdcB) (Staphylococcus aureus (strain USA300)).